The sequence spans 496 residues: Solute carrier family 2, facilitated glucose transporter member 3 (496 aa).

Topologically, residues 1–10 are cytoplasmic; that stretch reads MGTQKVTPAL. The helical transmembrane segment at 11-32 threads the bilayer; sequence IFAITVATIGSFQFGYNTGVIN. The Extracellular segment spans residues 33–64; it reads APEKIIKEFINKTLTDKGNAPPSEVLLTSLWS. N-linked (GlcNAc...) asparagine glycosylation occurs at Asn-43. The helical transmembrane segment at 65-85 threads the bilayer; the sequence is LSVAIFSVGGMIGSFSVGLFV. The Cytoplasmic portion of the chain corresponds to 86 to 90; sequence NRFGR. A helical transmembrane segment spans residues 91–111; it reads RNSMLIVNLLAVTGGCFMGLC. Residues 112-118 are Extracellular-facing; it reads KVAKSVE. The chain crosses the membrane as a helical span at residues 119–142; the sequence is MLILGRLIIGLFCGLCTGFVPMYI. Topologically, residues 143–153 are cytoplasmic; the sequence is GEISPTALRGA. A helical transmembrane segment spans residues 154-174; the sequence is FGTLNQLGIVVGILVAQIFGL. Gln-159 lines the D-glucose pocket. The Extracellular segment spans residues 175–183; it reads EFILGSEEL. A helical membrane pass occupies residues 184-204; it reads WPLLLGFTILPTILQSAALPF. Over 205 to 269 the chain is Cytoplasmic; the sequence is CPESPRFLLI…LFRVSSYRQP (65 aa). Thr-232 carries the post-translational modification Phosphothreonine. A helical transmembrane segment spans residues 270 to 290; the sequence is IIISIVLQLSQQLSGINAVFY. Residues 277–279 form an important for selectivity against fructose region; the sequence is QLS. D-glucose-binding positions include 280 to 281 and Asn-286; that span reads QQ. Over 291-304 the chain is Extracellular; it reads YSTGIFKDAGVQEP. The helical transmembrane segment at 305-325 threads the bilayer; the sequence is IYATIGAGVVNTIFTVVSLFL. Residue Asn-315 participates in D-glucose binding. Over 326 to 331 the chain is Cytoplasmic; sequence VERAGR. A helical transmembrane segment spans residues 332–352; it reads RTLHMIGLGGMAFCSTLMTVS. Topologically, residues 353-363 are extracellular; that stretch reads LLLKDNYNGMS. The chain crosses the membrane as a helical span at residues 364–389; it reads FVCIGAILVFVAFFEIGPGPIPWFIV. The D-glucose site is built by Glu-378 and Trp-386. Topologically, residues 390–399 are cytoplasmic; sequence AELFSQGPRP. Residues 400–420 form a helical membrane-spanning segment; the sequence is AAMAVAGCSNWTSNFLVGLLF. The Extracellular segment spans residues 421-429; sequence PSAAHYLGA. The chain crosses the membrane as a helical span at residues 430-450; it reads YVFIIFTGFLITFLAFTFFKV. The Cytoplasmic portion of the chain corresponds to 451 to 496; it reads PETRGRTFEDITRAFEGQAHGADRSGKDGVMEVNSIEPAKETTTNV. 2 positions are modified to phosphoserine: Ser-475 and Ser-485. Phosphothreonine is present on Thr-492.

It belongs to the major facilitator superfamily. Sugar transporter (TC 2.A.1.1) family. Glucose transporter subfamily. Interacts with SMIM43; the interaction may promote SLC2A3-mediated glucose transport to meet the energy needs of mesendoderm differentiation.

The protein localises to the cell membrane. The protein resides in the perikaryon. It localises to the cell projection. The enzyme catalyses D-glucose(out) = D-glucose(in). It carries out the reaction D-galactose(in) = D-galactose(out). With respect to regulation, deoxyglucose transport is inhibited by D-glucose, D-galactose and maltose. Galactose transport is inhibited by D-glucose and maltose. Facilitative glucose transporter. Can also mediate the uptake of various other monosaccharides across the cell membrane. Mediates the uptake of glucose, 2-deoxyglucose, galactose, mannose, xylose and fucose, and probably also dehydroascorbate. Does not mediate fructose transport. Required for mesendoderm differentiation. The polypeptide is Solute carrier family 2, facilitated glucose transporter member 3 (Pongo abelii (Sumatran orangutan)).